The sequence spans 537 residues: Chaperonin GroEL (537 aa).

ATP is bound by residues 29 to 32 (TLGP), 86 to 90 (DGTTT), Gly413, 477 to 479 (NAA), and Asp493.

Belongs to the chaperonin (HSP60) family. Forms a cylinder of 14 subunits composed of two heptameric rings stacked back-to-back. Interacts with the co-chaperonin GroES.

The protein localises to the cytoplasm. The enzyme catalyses ATP + H2O + a folded polypeptide = ADP + phosphate + an unfolded polypeptide.. Functionally, together with its co-chaperonin GroES, plays an essential role in assisting protein folding. The GroEL-GroES system forms a nano-cage that allows encapsulation of the non-native substrate proteins and provides a physical environment optimized to promote and accelerate protein folding. This chain is Chaperonin GroEL, found in Bifidobacterium animalis subsp. lactis (strain AD011).